The chain runs to 261 residues: uncharacterized protein (261 aa).

Residues M1 to G22 form the signal peptide. C23 is lipidated: N-palmitoyl cysteine. C23 carries the S-diacylglycerol cysteine lipid modification.

This sequence belongs to the staphylococcal tandem lipoprotein family.

The protein localises to the cell membrane. This is an uncharacterized protein from Staphylococcus aureus (strain USA300).